The following is a 208-amino-acid chain: Small ribosomal subunit protein uS4 (208 aa).

Positions 98 to 159 (RRLDNVVYRL…KSRNVAAISE (62 aa)) constitute an S4 RNA-binding domain.

The protein belongs to the universal ribosomal protein uS4 family. Part of the 30S ribosomal subunit. Contacts protein S5. The interaction surface between S4 and S5 is involved in control of translational fidelity.

Functionally, one of the primary rRNA binding proteins, it binds directly to 16S rRNA where it nucleates assembly of the body of the 30S subunit. In terms of biological role, with S5 and S12 plays an important role in translational accuracy. The protein is Small ribosomal subunit protein uS4 of Trichlorobacter lovleyi (strain ATCC BAA-1151 / DSM 17278 / SZ) (Geobacter lovleyi).